Here is a 165-residue protein sequence, read N- to C-terminus: UPF0114 protein ESA_00283 (165 aa).

The next 3 helical transmembrane spans lie at 15-35, 53-73, and 136-156; these read LLAP…VKFF, LILL…LVMV, and LMWY…MGYL.

Belongs to the UPF0114 family.

The protein localises to the cell membrane. This is UPF0114 protein ESA_00283 from Cronobacter sakazakii (strain ATCC BAA-894) (Enterobacter sakazakii).